Here is a 176-residue protein sequence, read N- to C-terminus: 2-oxo-4-hydroxy-4-carboxy-5-ureidoimidazoline decarboxylase (176 aa).

His70 functions as the Proton donor; for OHCU decarboxylase activity in the catalytic mechanism. Substrate is bound by residues Pro71, 83-87 (SQEEQ), and 118-122 (FIMAV). Residues 72 to 96 (DLGERTEMTDESQEEQASAGLDRLP) form a disordered region.

This sequence belongs to the OHCU decarboxylase family.

The catalysed reaction is 5-hydroxy-2-oxo-4-ureido-2,5-dihydro-1H-imidazole-5-carboxylate + H(+) = (S)-allantoin + CO2. Its pathway is purine metabolism; urate degradation; (S)-allantoin from urate: step 3/3. Its function is as follows. Catalyzes the stereoselective decarboxylation of 2-oxo-4-hydroxy-4-carboxy-5-ureidoimidazoline (OHCU) to (S)-allantoin. This Halalkalicoccus jeotgali (strain DSM 18796 / CECT 7217 / JCM 14584 / KCTC 4019 / B3) protein is 2-oxo-4-hydroxy-4-carboxy-5-ureidoimidazoline decarboxylase.